Reading from the N-terminus, the 273-residue chain is Tryptophan synthase alpha chain (273 aa).

Active-site proton acceptor residues include Glu56 and Asp67.

It belongs to the TrpA family. Tetramer of two alpha and two beta chains.

The enzyme catalyses (1S,2R)-1-C-(indol-3-yl)glycerol 3-phosphate + L-serine = D-glyceraldehyde 3-phosphate + L-tryptophan + H2O. It functions in the pathway amino-acid biosynthesis; L-tryptophan biosynthesis; L-tryptophan from chorismate: step 5/5. The alpha subunit is responsible for the aldol cleavage of indoleglycerol phosphate to indole and glyceraldehyde 3-phosphate. The sequence is that of Tryptophan synthase alpha chain from Shewanella baltica (strain OS185).